Consider the following 268-residue polypeptide: Zinc finger protein SNAI2 (268 aa).

The SNAG domain stretch occupies residues 1–20 (MPRSFLVKKHFNASKKPNYS). Residues 84–116 (GRVSPLPSSDTSSKDHSGSESPISDEEERLQPK) are disordered. C2H2-type zinc fingers lie at residues 128 to 150 (FQCN…KQLH), 159 to 181 (FSCK…IRTH), 185 to 207 (CVCK…IRTH), and 213 to 235 (FSCP…LQTH). A C2H2-type 5; atypical zinc finger spans residues 241–264 (YQCKNCSKTFSRMSLLHKHEESGC).

The protein belongs to the snail C2H2-type zinc-finger protein family. Interacts (via SNAG domain) with LIMD1 (via LIM domains), WTIP (via LIM domains) and AJUBA (via LIM domains). Interacts (via zinc fingers) with KPNA2, KPNB1 and TNPO1. May interact (via zinc fingers) with IPO7. Phosphorylated by GSK3B. Once phosphorylated, it becomes a target for ubiquitination. In terms of processing, ubiquitinated by the SCF(FBXO11) complex; ubiquitination requires previous GSK3B-mediated SNAI2 phosphorylation.

The protein resides in the nucleus. Its subcellular location is the cytoplasm. In terms of biological role, transcriptional repressor that modulates both activator-dependent and basal transcription. Involved in the generation and migration of neural crest cells. Plays a role in mediating RAF1-induced transcriptional repression of the TJ protein, occludin (OCLN) and subsequent oncogenic transformation of epithelial cells. Represses BRCA2 expression by binding to its E2-box-containing silencer and recruiting CTBP1 and HDAC1 in breast cells. In epidermal keratinocytes, binds to the E-box in ITGA3 promoter and represses its transcription. Involved in the regulation of ITGB1 and ITGB4 expression and cell adhesion and proliferation in epidermal keratinocytes. Binds to E-box2 domain of BSG and activates its expression during TGFB1-induced epithelial-mesenchymal transition (EMT) in hepatocytes. Represses E-Cadherin/CDH1 transcription via E-box elements. Involved in osteoblast maturation. Binds to RUNX2 and SOC9 promoters and may act as a positive and negative transcription regulator, respectively, in osteoblasts. Binds to CXCL12 promoter via E-box regions in mesenchymal stem cells and osteoblasts. Plays an essential role in TWIST1-induced EMT and its ability to promote invasion and metastasis. The chain is Zinc finger protein SNAI2 (Snai2) from Rattus norvegicus (Rat).